A 259-amino-acid chain; its full sequence is 5'-nucleotidase SurE (259 aa).

4 residues coordinate a divalent metal cation: aspartate 8, aspartate 9, serine 40, and asparagine 92.

This sequence belongs to the SurE nucleotidase family. The cofactor is a divalent metal cation.

It is found in the cytoplasm. The enzyme catalyses a ribonucleoside 5'-phosphate + H2O = a ribonucleoside + phosphate. Its function is as follows. Nucleotidase that shows phosphatase activity on nucleoside 5'-monophosphates. This is 5'-nucleotidase SurE from Xanthomonas oryzae pv. oryzae (strain MAFF 311018).